The chain runs to 901 residues: HTH-type transcriptional regulator MalT (901 aa).

39–46 (SPAGYGKT) serves as a coordination point for ATP. The region spanning 829–894 (ELIRTSPLTQ…AAVQHAQKLL (66 aa)) is the HTH luxR-type domain. The segment at residues 853–872 (NEQIAGELEVAATTIKTHIR) is a DNA-binding region (H-T-H motif).

The protein belongs to the MalT family. Monomer in solution. Oligomerizes to an active state in the presence of the positive effectors ATP and maltotriose.

With respect to regulation, activated by ATP and maltotriose, which are both required for DNA binding. In terms of biological role, positively regulates the transcription of the maltose regulon whose gene products are responsible for uptake and catabolism of malto-oligosaccharides. Specifically binds to the promoter region of its target genes, recognizing a short DNA motif called the MalT box. In Escherichia coli O139:H28 (strain E24377A / ETEC), this protein is HTH-type transcriptional regulator MalT.